Reading from the N-terminus, the 93-residue chain is Head virion protein G6P (93 aa).

A run of 2 helical transmembrane segments spans residues 25–45 (GVGI…LNLL) and 56–76 (ILDI…GSAL).

It belongs to the inovirus G6P protein family. As to quaternary structure, interacts with G3P; this interaction is required for proper integration of G3P and G6P into the virion.

The protein resides in the virion. Its subcellular location is the host membrane. Functionally, plays essential roles both in the entry of the viral genome into the bacterial host and in budding process. The formation of the G3P-G6P complex termed adsorption complex is essential for correct termination of filamentous phage assembly. The polypeptide is Head virion protein G6P (VI) (Pseudomonas phage Pf3 (Bacteriophage Pf3)).